The following is a 74-amino-acid chain: Veswaprin-a (74 aa).

An N-terminal signal peptide occupies residues Met1 to Gly24. The 45-residue stretch at Arg27–Ile71 folds into the WAP domain. 4 cysteine pairs are disulfide-bonded: Cys34/Cys59, Cys42/Cys63, Cys46/Cys58, and Cys52/Cys67.

This sequence belongs to the venom waprin family. Expressed by the venom gland.

Its subcellular location is the secreted. Its function is as follows. Damages membranes of susceptible bacteria. Has no hemolytic activity. Not toxic to mice. Does not inhibit the proteinases elastase and cathepsin G. The polypeptide is Veswaprin-a (Demansia vestigiata (Lesser black whip snake)).